A 338-amino-acid chain; its full sequence is Dihydroorotate dehydrogenase (quinone) (338 aa).

FMN-binding positions include 68-72 (AGMDK) and Thr92. Lys72 lines the substrate pocket. 117–121 (NRMGF) is a binding site for substrate. FMN is bound by residues Ser147 and Asn180. Residue Asn180 participates in substrate binding. The Nucleophile role is filled by Ser183. Asn185 is a substrate binding site. Lys214 and Thr242 together coordinate FMN. Residue 243 to 244 (NT) participates in substrate binding. FMN is bound by residues Gly267, Gly296, and 317–318 (YT).

It belongs to the dihydroorotate dehydrogenase family. Type 2 subfamily. Monomer. It depends on FMN as a cofactor.

The protein resides in the cell membrane. It carries out the reaction (S)-dihydroorotate + a quinone = orotate + a quinol. Its pathway is pyrimidine metabolism; UMP biosynthesis via de novo pathway; orotate from (S)-dihydroorotate (quinone route): step 1/1. In terms of biological role, catalyzes the conversion of dihydroorotate to orotate with quinone as electron acceptor. The chain is Dihydroorotate dehydrogenase (quinone) from Salinispora arenicola (strain CNS-205).